The following is a 523-amino-acid chain: MAPSNTERALPVLAIWAAIGLAYWIDSQKKKKHHLPPGPKKLPIIGNVMDLPAKIEWETYARWGKEYNSDIIQVSAVGTSIVILNSANAANDLLLKRSAIYSSRPHSTMHHELSGWGFTWALMPYGESWRAGRRSFTKHFNSSNPGINQPRELRYVKRFLKQLYEKPNDVLDHVRNLVGSTTLSMTYGLETEPYNDPYVELVEKAVLAASEIMTSGAFLVDIIPAMKHIPPWVPGTIFHQKAALMRGHAYYVREQPFKVAQEMIKTGDYEPSFVSDALRDLENSETPEEDLEHLKDVAGQVYIAGADTTASALGTFFLAMVCFPEVQKKAQQELDSVLNGRLPEHADFPSFPYLNAVIKEVYRWRPVTPMGVPHQTIADDVYRDYHIPKGSIVFANQWAMSNDENDYPQPGEFRPERYLTEDGKPNKAVRDPFDIAFGFGRRICAGRYLAHSTITLAAASVLSLFDLLKAVDENGKEIEPTREYHQAMISRPLEFPCRIKPRNKEAEEVIRACPLTFTKPTSA.

The chain crosses the membrane as a helical span at residues 9–29; sequence ALPVLAIWAAIGLAYWIDSQK. The N-linked (GlcNAc...) asparagine glycan is linked to N141. Position 444 (C444) interacts with heme.

It belongs to the cytochrome P450 family. It depends on heme as a cofactor.

It is found in the membrane. The protein operates within secondary metabolite biosynthesis; terpenoid biosynthesis. In terms of biological role, cytochrome P450 monooxygenase; part of the gene cluster that mediates the biosynthesis of pleuromutilin, a tricyclic diterpene showing antibacterial properties. The geranylgeranyl diphosphate (GGPP) synthase ple4 catalyzes the first step in pleuromutilin biosynthesis. GGPP is then substrate of the premutilin synthase (PS) ple3 to yield premutilin. Premutilin synthase is a bifunctional enzyme composed of the fusion of a class II diterpene cyclase (DTC) and a class I diterpene synthase (DTS), with the corresponding domains and active sites containing characteristic aspartate-rich motifs. GGPP is first converted to mutildienyl-diphosphate (MPP) at the class II DTC site. MPP is subsequently further cyclized at the class I DTS site, followed by a 1,5-hydride shift and addition of water prior to terminating deprotonation, to yield premutilin. The cytochrome P450 monooxygenases ple5 and ple6 hydroxylate premutilin at C-11 and C-3, respectively, producing 11-hydroxypremutilin and 3-hydroxypremutilin. The combination of the actions of both ple5 and ple6 leads to the production of 3,11-dihydroxypremutilin. The short chain dehydrogenase ple7 further converts 3,11-dihydroxypremutilin into mutilin. The acetyltransferase ple2 then acetylates mutilin to produce 14-O-acetylmutilin. Finally, the cytochrome P450 monooxygenase ple1 catalyzes hydroxylation on the alpha position of the acetyl side chain of 14-O-acetylmutilin to yield pleuromutilin. This chain is Cytochrome P450 monooxygenase ple1, found in Rhodocybe pseudopiperita (Clitopilus pseudopiperitus).